Reading from the N-terminus, the 305-residue chain is Taste receptor type 2 member 136 (305 aa).

The Extracellular portion of the chain corresponds to 1–9; the sequence is MMSFLVSIA. The helical transmembrane segment at 10 to 30 threads the bilayer; sequence SIAMLVKIVLGTFANVFIVLV. Residues 31-46 are Cytoplasmic-facing; sequence NFTDCIKKRKFLLADR. The chain crosses the membrane as a helical span at residues 47-67; the sequence is ILTVLAIFRFDLLWIILMNWS. Topologically, residues 68–69 are extracellular; that stretch reads SS. The helical transmembrane segment at 70-90 threads the bilayer; sequence VFHVGLYFQVRFCICVVWIVT. Residues 91 to 99 lie on the Cytoplasmic side of the membrane; that stretch reads NHFNTWLAN. The helical transmembrane segment at 100 to 120 threads the bilayer; sequence ILSILYLLKIDNFSNLIFLGL. Residues 121 to 127 are Extracellular-facing; the sequence is KGKIKCP. Residues 128–148 traverse the membrane as a helical segment; the sequence is YIVLLPCFVLLFPNLIMVTIC. Residues 149–176 are Cytoplasmic-facing; that stretch reads ETTQANGHQGNLTGKTKLTYFTNLIAMT. A helical membrane pass occupies residues 177–197; sequence FTLGSLVPFTTFMICFLLLIC. The Extracellular segment spans residues 198–223; it reads SLCKHLRTMRLYGKGSQGPSASTHIK. A helical membrane pass occupies residues 224–244; it reads VLQVLISFLLLFSMFILLLII. Over 245 to 305 the chain is Cytoplasmic; that stretch reads SDYNYTKSLE…ARFWLKEKKP (61 aa).

The protein belongs to the G-protein coupled receptor T2R family.

It is found in the membrane. Its function is as follows. Putative taste receptor which may play a role in the perception of bitterness. The polypeptide is Taste receptor type 2 member 136 (Tas2r136) (Mus musculus (Mouse)).